The following is a 768-amino-acid chain: MRMELISVIFFFFCSVLSSSALNSDGLVLMKFKSSVLVDPLSLLQTWNYKHESPCSWRGISCNNDSKVLTLSLPNSQLLGSIPSDLGSLLTLQSLDLSNNSFNGPLPVSFFNARELRFLDLSSNMISGEIPSAIGDLHNLLTLNLSDNALAGKLPTNLASLRNLTVVSLENNYFSGEIPGGWRVVEFLDLSSNLINGSLPPDFGGYSLQYLNVSFNQISGEIPPEIGVNFPRNVTVDLSFNNLTGPIPDSPVFLNQESNFFSGNPGLCGEPTRNPCLIPSSPSIVSEADVPTSTPAIAAIPNTIGSNPVTDPNSQQTDPNPRTGLRPGVIIGIVVGDIAGIGILAVIFLYIYRCKKNKIVDNNNNDKQRTETDTITLSTFSSSSSSPEESRRFRKWSCLRKDPETTPSEEEDEDDEDEESGYNANQRSGDNKLVTVDGEKEMEIETLLKASAYILGATGSSIMYKAVLEDGRVFAVRRLGENGLSQRRFKDFEPHIRAIGKLVHPNLVRLCGFYWGTDEKLVIYDFVPNGSLVNPRYRKGGGSSSPYHLPWETRLKIAKGIARGLAYLHEKKHVHGNLKPSNILLGHDMEPKIGDFGLERLLTGETSYIRAGGSSRIFSSKRYTTSSREFSSIGPTPSPSPSSVGAMSPYCAPESFRSLKPSPKWDVYGFGVILLELLTGKIVSVEEIVLGNGLTVEDGHRAVRMADVAIRGELDGKQEFLLDCFKLGYSCASPVPQKRPTMKESLAVLERFHPNSSVIKSSSFHYGH.

Positions 1 to 21 are cleaved as a signal peptide; it reads MRMELISVIFFFFCSVLSSSA. The Extracellular segment spans residues 22–328; sequence LNSDGLVLMK…PNPRTGLRPG (307 aa). An N-linked (GlcNAc...) asparagine glycan is attached at Asn-64. LRR repeat units lie at residues 67–90, 91–112, 115–137, 139–162, 163–183, 184–206, 207–229, and 232–254; these read KVLT…GSLL, TLQS…SFFN, ELRF…IGDL, NLLT…ASLR, NLTV…GGWR, VVEF…FGGY, SLQY…IGVN, and RNVT…PVFL. N-linked (GlcNAc...) asparagine glycosylation occurs at Asn-99. N-linked (GlcNAc...) asparagine glycans are attached at residues Asn-144, Asn-163, Asn-196, Asn-212, Asn-233, and Asn-242. Residues 301–324 are disordered; the sequence is PNTIGSNPVTDPNSQQTDPNPRTG. Over residues 303–320 the composition is skewed to polar residues; sequence TIGSNPVTDPNSQQTDPN. A helical transmembrane segment spans residues 329–349; sequence VIIGIVVGDIAGIGILAVIFL. Residues 350–768 lie on the Cytoplasmic side of the membrane; that stretch reads YIYRCKKNKI…IKSSSFHYGH (419 aa). Positions 361-432 are disordered; sequence DNNNNDKQRT…NANQRSGDNK (72 aa). Over residues 378–387 the composition is skewed to low complexity; that stretch reads STFSSSSSSP. The segment covering 407–420 has biased composition (acidic residues); that stretch reads PSEEEDEDDEDEES. The Protein kinase domain maps to 449-756; the sequence is KASAYILGAT…AVLERFHPNS (308 aa). 2 positions are modified to phosphoserine: Ser-451 and Ser-531. Phosphothreonine is present on Thr-553. Residue Ser-662 is modified to Phosphoserine.

It belongs to the protein kinase superfamily. Ser/Thr protein kinase family.

It localises to the membrane. It carries out the reaction L-seryl-[protein] + ATP = O-phospho-L-seryl-[protein] + ADP + H(+). It catalyses the reaction L-threonyl-[protein] + ATP = O-phospho-L-threonyl-[protein] + ADP + H(+). This Arabidopsis thaliana (Mouse-ear cress) protein is Probable LRR receptor-like serine/threonine-protein kinase At4g37250.